A 260-amino-acid polypeptide reads, in one-letter code: Small ribosomal subunit protein uS2 (260 aa).

It belongs to the universal ribosomal protein uS2 family.

This chain is Small ribosomal subunit protein uS2, found in Streptococcus gordonii (strain Challis / ATCC 35105 / BCRC 15272 / CH1 / DL1 / V288).